A 421-amino-acid chain; its full sequence is UDP-glucuronic acid decarboxylase 1 (421 aa).

Residues 1 to 19 (MVRTRIQRLLTGINRRMMK) lie on the Cytoplasmic side of the membrane. A helical transmembrane segment spans residues 20–40 (LLIALALIAYVASVWGNFVNM). At 41–421 (SKSIQENGEQ…RVKKGRTRHN (381 aa)) the chain is on the lumenal side. NAD(+) contacts are provided by glycine 99, phenylalanine 100, valine 101, aspartate 120, asparagine 121, phenylalanine 123, threonine 124, glycine 125, aspartate 145, and valine 146. Residues leucine 150 and tyrosine 151 each contribute to the UDP-alpha-D-glucuronate site. NAD(+) contacts are provided by leucine 160 and serine 162. UDP-alpha-D-glucuronate is bound at residue lysine 178. Threonine 179 serves as a coordination point for NAD(+). Asparagine 186, glycine 189, lysine 192, and arginine 193 together coordinate UDP-alpha-D-glucuronate. 3 residues coordinate NAD(+): alanine 201, tyrosine 232, and lysine 236. The Proton acceptor role is filled by tyrosine 232. Residues tyrosine 246, glutamine 249, and glutamate 250 each contribute to the UDP-alpha-D-glucuronate site. 3 residues coordinate NAD(+): threonine 262, histidine 268, and arginine 273. N-linked (GlcNAc...) asparagine glycans are attached at residues asparagine 317 and asparagine 386. The disordered stretch occupies residues 400 to 421 (ANNQYIPKPKPARVKKGRTRHN). The segment covering 409–421 (KPARVKKGRTRHN) has biased composition (basic residues).

It belongs to the NAD(P)-dependent epimerase/dehydratase family. UDP-glucuronic acid decarboxylase subfamily. As to quaternary structure, homodimer and homotetramer. NAD(+) is required as a cofactor.

The protein localises to the golgi apparatus. The protein resides in the golgi stack membrane. It carries out the reaction UDP-alpha-D-glucuronate + H(+) = UDP-alpha-D-xylose + CO2. Its pathway is nucleotide-sugar biosynthesis; UDP-alpha-D-xylose biosynthesis; UDP-alpha-D-xylose from UDP-alpha-D-glucuronate: step 1/1. Its function is as follows. Catalyzes the NAD-dependent decarboxylation of UDP-glucuronic acid to UDP-xylose. Necessary for the biosynthesis of the core tetrasaccharide in glycosaminoglycan biosynthesis. This Xenopus tropicalis (Western clawed frog) protein is UDP-glucuronic acid decarboxylase 1 (uxs1).